A 204-amino-acid chain; its full sequence is MVDQLRERTTMADPLRERTELLLADYLGYCAREPGTPEPAPSTPEAAVLRSAAARLRQIHRSFFSAYLGYPGNRFELVALMADSVLSDSPGPTWGRVVTLVTFAGTLLERGPLVTARWKKWGFQPRLKEQEGDVARDCQRLVALLSSRLMGQHRAWLQAQGGWDGFCHFFRTPFPLAFWRKQLVQAFLSCLLTTAFIYLWTRLL.

A BH1 motif is present at residues Leu86–Gly105. The interval Trp118–Asp133 is required for Ca(2+) binding. Glycyl lysine isopeptide (Lys-Gly) (interchain with G-Cter in ubiquitin) cross-links involve residues Lys119, Lys120, and Lys128. The short motif at Trp156 to Cys167 is the BH2 element. A helical transmembrane segment spans residues Leu183–Trp200.

This sequence belongs to the Bcl-2 family. In terms of assembly, interacts with BAX. Interacts with BCL2 and BCL2L1/BCLX. Interacts with APAF1. Interacts with ITPR1, ITPR2 and ITPR3; the interaction with ITPR1 is increased in the presence of AHCLY1. Interacts with AHCYL1. Interacts with HIP1R (via ENTH and I/LWEQ domains). Interacts with CASP9. Interacts with BCL2L11/BIM. Interacts with BIK. Interacts with UBQLN4. Interacts with NME2/NM23-H2. Interacts with PMAIP1/NOXA. Interacts with TPX2. Interacts with UBQLN1; in the cytoplasm. Interacts (via BH1 domain) with BECN1. Requires Ca(2+) as cofactor. Monoubiquitinated by UBQLN1; results in stabilization of BCL2L10 protein abundance and in relocalization from mitochondria to cytoplasm. As to expression, widely expressed in adult tissues. Preferentially expressed in lung, liver and kidney.

The protein localises to the mitochondrion. The protein resides in the nucleus membrane. It localises to the endoplasmic reticulum. It is found in the cytoplasm. Its subcellular location is the cytoskeleton. The protein localises to the spindle. Functionally, promotes cell survival by suppressing apoptosis induced by BAX but not BAK. Increases binding of AHCYL1/IRBIT to ITPR1. Reduces ITPR1-mediated calcium release from the endoplasmic reticulum cooperatively with AHCYL1/IRBIT under normal cellular conditions. Under apoptotic stress conditions, dissociates from ITPR1 and is displaced from mitochondria-associated endoplasmic reticulum membranes, leading to increased Ca(2+) transfer to mitochondria which promotes apoptosis. Required for the correct formation of the microtubule organizing center during oocyte cell division, potentially via regulation of protein abundance and localization of other microtubule organizing center components such as AURKA and TPX2. This is Bcl-2-like protein 10 from Homo sapiens (Human).